We begin with the raw amino-acid sequence, 195 residues long: Probable chemoreceptor glutamine deamidase CheD 2 (195 aa).

Belongs to the CheD family.

It carries out the reaction L-glutaminyl-[protein] + H2O = L-glutamyl-[protein] + NH4(+). Functionally, probably deamidates glutamine residues to glutamate on methyl-accepting chemotaxis receptors (MCPs), playing an important role in chemotaxis. The protein is Probable chemoreceptor glutamine deamidase CheD 2 of Burkholderia thailandensis (strain ATCC 700388 / DSM 13276 / CCUG 48851 / CIP 106301 / E264).